Here is a 213-residue protein sequence, read N- to C-terminus: Vacuolar ATPase assembly integral membrane protein vph2 (213 aa).

The next 2 helical transmembrane spans lie at 113-133 (ISAI…VWYC) and 142-162 (KIAL…FLYV).

The protein resides in the endoplasmic reticulum membrane. In terms of biological role, required for vacuolar ATPase assembly. This Schizosaccharomyces pombe (strain 972 / ATCC 24843) (Fission yeast) protein is Vacuolar ATPase assembly integral membrane protein vph2 (vph2).